The primary structure comprises 566 residues: Viral IRF3-like protein (566 aa).

Disordered stretches follow at residues 151-170 (PRPFVGENSDSSEEDHPAFC) and 176-236 (QTGA…VHTD).

Belongs to the IRF family. Interacts with host SKP2. Interacts with host USP7.

Its function is as follows. Plays a role in the inhibition of host immune response. Interferes with the transactivating potential of cellular IRFs IRF3 and IRF7 that play a critical role in the induction of IFNA and IFNB genes. Additionally, interferes with surface major histocompatibility complex class II (MHC-II) antigen presentation. This Human herpesvirus 8 type P (isolate GK18) (HHV-8) protein is Viral IRF3-like protein (vIRF-3).